A 180-amino-acid chain; its full sequence is NAD(P)H-quinone oxidoreductase subunit I, chloroplastic (180 aa).

4Fe-4S ferredoxin-type domains follow at residues 55 to 84 (GRIH…VDWR) and 95 to 124 (LNYS…MTEE). Cysteine 64, cysteine 67, cysteine 70, cysteine 74, cysteine 104, cysteine 107, cysteine 110, and cysteine 114 together coordinate [4Fe-4S] cluster.

This sequence belongs to the complex I 23 kDa subunit family. In terms of assembly, NDH is composed of at least 16 different subunits, 5 of which are encoded in the nucleus. Requires [4Fe-4S] cluster as cofactor.

It localises to the plastid. It is found in the chloroplast thylakoid membrane. The catalysed reaction is a plastoquinone + NADH + (n+1) H(+)(in) = a plastoquinol + NAD(+) + n H(+)(out). It carries out the reaction a plastoquinone + NADPH + (n+1) H(+)(in) = a plastoquinol + NADP(+) + n H(+)(out). Functionally, NDH shuttles electrons from NAD(P)H:plastoquinone, via FMN and iron-sulfur (Fe-S) centers, to quinones in the photosynthetic chain and possibly in a chloroplast respiratory chain. The immediate electron acceptor for the enzyme in this species is believed to be plastoquinone. Couples the redox reaction to proton translocation, and thus conserves the redox energy in a proton gradient. This is NAD(P)H-quinone oxidoreductase subunit I, chloroplastic from Chloranthus spicatus (Chulantree).